The following is a 165-amino-acid chain: MAGRLDEDLKDVTLLGNQNTKYLFEYSPEILEVFDNNHPNRDYFVKFNCPEFTSLCPKTGQPDFATIYISYIPEQRMVESKSLKLYLFSFRNHGDFHEDCMNVIMNDLIKLMDPRYIEVWGKFTPRGGISIDPYCNYGRPGTKYEQMADYRMMNHDLYPETIDNR.

Cys-56 serves as the catalytic Thioimide intermediate. Residue Asp-63 is the Proton donor of the active site. Substrate contacts are provided by residues 78 to 80 (VES) and 97 to 98 (HE).

Belongs to the GTP cyclohydrolase I family. QueF type 1 subfamily.

It localises to the cytoplasm. It carries out the reaction 7-aminomethyl-7-carbaguanine + 2 NADP(+) = 7-cyano-7-deazaguanine + 2 NADPH + 3 H(+). It participates in tRNA modification; tRNA-queuosine biosynthesis. Functionally, catalyzes the NADPH-dependent reduction of 7-cyano-7-deazaguanine (preQ0) to 7-aminomethyl-7-deazaguanine (preQ1). The sequence is that of NADPH-dependent 7-cyano-7-deazaguanine reductase from Bacillus anthracis (strain A0248).